A 261-amino-acid chain; its full sequence is CD40 ligand (261 aa).

Residues 1-22 (MIETYNQPSPRSAATGLPVRMK) lie on the Cytoplasmic side of the membrane. A helical; Signal-anchor for type II membrane protein transmembrane segment spans residues 23-43 (IFMYLLTIFLITQMIGSALFA). Residues 44–261 (VYLHRRLDKI…GFTSFGLLKL (218 aa)) lie on the Extracellular side of the membrane. Residues 122–261 (IAAHVISEAS…GFTSFGLLKL (140 aa)) enclose the THD domain. A disulfide bridge links Cys-178 with Cys-218. The N-linked (GlcNAc...) asparagine glycan is linked to Asn-240.

It belongs to the tumor necrosis factor family. Homotrimer. Interacts with CD28. CD40 ligand, soluble form: Exists as either a monomer or a homotrimer. Forms a ternary complex between CD40 and integrins for CD40-CD40LG signaling. Post-translationally, the soluble form derives from the membrane form by proteolytic processing.

It is found in the cell membrane. The protein resides in the cell surface. Its subcellular location is the secreted. Its function is as follows. Cytokine that acts as a ligand to CD40/TNFRSF5. Costimulates T-cell proliferation and cytokine production. Its cross-linking on T-cells generates a costimulatory signal which enhances the production of IL4 and IL10 in conjunction with the TCR/CD3 ligation and CD28 costimulation. Induces the activation of NF-kappa-B. Induces the activation of kinases MAPK8 and PAK2 in T-cells. Mediates B-cell proliferation in the absence of co-stimulus as well as IgE production in the presence of IL4. Involved in immunoglobulin class switching. In terms of biological role, acts as a ligand for integrins, specifically ITGA5:ITGB1 and ITGAV:ITGB3; both integrins and the CD40 receptor are required for activation of CD40-CD40LG signaling, which have cell-type dependent effects, such as B-cell activation, NF-kappa-B signaling and anti-apoptotic signaling. The polypeptide is CD40 ligand (CD40LG) (Cercocebus atys (Sooty mangabey)).